A 511-amino-acid polypeptide reads, in one-letter code: Lysine--tRNA ligase (511 aa).

Residues 1 to 20 (MQKNTSQPTNTNEQSNQPSL) form a disordered region. Positions 422 and 429 each coordinate Mg(2+).

It belongs to the class-II aminoacyl-tRNA synthetase family. As to quaternary structure, homodimer. Requires Mg(2+) as cofactor.

Its subcellular location is the cytoplasm. The catalysed reaction is tRNA(Lys) + L-lysine + ATP = L-lysyl-tRNA(Lys) + AMP + diphosphate. The protein is Lysine--tRNA ligase of Chlorobium chlorochromatii (strain CaD3).